The following is a 201-amino-acid chain: Dephospho-CoA kinase (201 aa).

The DPCK domain maps to 3–201 (ILGLTGGIGS…QIDSRVGCKI (199 aa)). 11-16 (GSGKSL) is an ATP binding site.

This sequence belongs to the CoaE family.

It is found in the cytoplasm. The catalysed reaction is 3'-dephospho-CoA + ATP = ADP + CoA + H(+). It participates in cofactor biosynthesis; coenzyme A biosynthesis; CoA from (R)-pantothenate: step 5/5. Functionally, catalyzes the phosphorylation of the 3'-hydroxyl group of dephosphocoenzyme A to form coenzyme A. The protein is Dephospho-CoA kinase of Ehrlichia ruminantium (strain Welgevonden).